Consider the following 382-residue polypeptide: S-adenosylmethionine synthase (382 aa).

His-16 contributes to the ATP binding site. Asp-18 contributes to the Mg(2+) binding site. Glu-44 contributes to the K(+) binding site. Residues Glu-57 and Gln-100 each contribute to the L-methionine site. A flexible loop region spans residues 100 to 110; that stretch reads QSPDIAQGVDN. ATP-binding positions include 165–167, 231–232, Asp-240, 246–247, and Lys-267; these read DAK, RF, and RK. Asp-240 serves as a coordination point for L-methionine. Residue Lys-271 coordinates L-methionine.

The protein belongs to the AdoMet synthase family. Homotetramer; dimer of dimers. Mg(2+) is required as a cofactor. It depends on K(+) as a cofactor.

The protein localises to the cytoplasm. The catalysed reaction is L-methionine + ATP + H2O = S-adenosyl-L-methionine + phosphate + diphosphate. The protein operates within amino-acid biosynthesis; S-adenosyl-L-methionine biosynthesis; S-adenosyl-L-methionine from L-methionine: step 1/1. In terms of biological role, catalyzes the formation of S-adenosylmethionine (AdoMet) from methionine and ATP. The overall synthetic reaction is composed of two sequential steps, AdoMet formation and the subsequent tripolyphosphate hydrolysis which occurs prior to release of AdoMet from the enzyme. The protein is S-adenosylmethionine synthase of Legionella pneumophila (strain Paris).